A 539-amino-acid polypeptide reads, in one-letter code: Chaperone Ric-8A (539 aa).

A disordered region spans residues 507-539 (MGITPSGNLAPMENAIRDMADERSSSDSDLGLD). Basic and acidic residues predominate over residues 521–532 (AIRDMADERSSS).

It belongs to the synembryn family.

Its subcellular location is the cytoplasm. It is found in the cell cortex. Functionally, chaperone that specifically binds and folds nascent G alpha proteins prior to G protein heterotrimer formation, promoting their stability and activity: folds GNAI1, GNAO1, GNA13 and GNAQ. Does not fold G(s) G-alpha proteins GNAS nor GNAL. Also acts as a guanine nucleotide exchange factor (GEF) for G alpha proteins by stimulating exchange of bound GDP for free GTP. The sequence is that of Chaperone Ric-8A (RIC8A) from Gallus gallus (Chicken).